The primary structure comprises 300 residues: Manganese-binding lipoprotein MntA (300 aa).

The signal sequence occupies residues 1–19; sequence MKKVCFSFVIMVIALIAAG. A lipid anchor (N-palmitoyl cysteine) is attached at cysteine 20. Cysteine 20 carries S-diacylglycerol cysteine lipidation. Residues histidine 68, histidine 130, glutamate 196, and aspartate 271 each coordinate Mn(2+).

Belongs to the bacterial solute-binding protein 9 family.

The protein resides in the cell membrane. In terms of biological role, probably part of ATP-binding cassette (ABC) transport system MntABCD involved in manganese import. Binds manganese and delivers it to the membrane permease for translocation into the cytoplasm. In Halalkalibacterium halodurans (strain ATCC BAA-125 / DSM 18197 / FERM 7344 / JCM 9153 / C-125) (Bacillus halodurans), this protein is Manganese-binding lipoprotein MntA (mntA).